Consider the following 309-residue polypeptide: Ornithine carbamoyltransferase (309 aa).

Carbamoyl phosphate is bound by residues 51–54, Q78, R102, and 129–132; these read STRT and HPCQ. L-ornithine-binding positions include N161, D225, and 229 to 230; that span reads SM. Residues 265 to 266 and R293 contribute to the carbamoyl phosphate site; that span reads CL.

Belongs to the aspartate/ornithine carbamoyltransferase superfamily. OTCase family.

Its subcellular location is the cytoplasm. It carries out the reaction carbamoyl phosphate + L-ornithine = L-citrulline + phosphate + H(+). It participates in amino-acid biosynthesis; L-arginine biosynthesis; L-arginine from L-ornithine and carbamoyl phosphate: step 1/3. Its function is as follows. Reversibly catalyzes the transfer of the carbamoyl group from carbamoyl phosphate (CP) to the N(epsilon) atom of ornithine (ORN) to produce L-citrulline. The protein is Ornithine carbamoyltransferase of Mycolicibacterium paratuberculosis (strain ATCC BAA-968 / K-10) (Mycobacterium paratuberculosis).